We begin with the raw amino-acid sequence, 85 residues long: 4-hydroxyphenylacetate decarboxylase small subunit (85 aa).

8 residues coordinate [4Fe-4S] cluster: His-4, Cys-7, Cys-20, Cys-34, Cys-43, Cys-46, Cys-60, and Cys-78.

This sequence belongs to the HPA decarboxylase small subunit family. As to quaternary structure, heterooctamer consisting of 4 large (HpdB) subunits and 4 small (HpdC) subunits, arranged as a tetramer of heterodimers. It depends on [4Fe-4S] cluster as a cofactor.

It catalyses the reaction 4-hydroxyphenylacetate + H(+) = 4-methylphenol + CO2. The catalysed reaction is 3,4-dihydroxyphenylacetate + H(+) = 4-methylcatechol + CO2. Component of the HPA decarboxylase that decarboxylates phenylacetates with a hydroxyl group in the p-position. Active toward 4-hydroxyphenylacetate and 3,4-dihydroxyphenylacetate, forming 4-methylphenol and 4-methylcatechol, respectively. Is likely involved in the catabolism of aromatic amino acids such as tyrosine fermentation. 4-methylphenol (p-cresol) formation provides metabolic toxicity, which allows an active suppression of other microbes and may provide growth advantages for the producers in highly competitive environments. The small subunit is essential for enzymatic activity of HPA decarboxylase, and also seems to be involved in the regulation of the enzyme oligomeric state and catalytic activity. The polypeptide is 4-hydroxyphenylacetate decarboxylase small subunit (Clostridioides difficile (strain CD196) (Peptoclostridium difficile)).